We begin with the raw amino-acid sequence, 218 residues long: Fibroblast growth factor 15 (218 aa).

The N-terminal stretch at 1–25 (MARKWNGRAVARALVLATLWLAVSG) is a signal peptide.

Belongs to the heparin-binding growth factors family. In terms of assembly, interacts with MALRD1. In terms of tissue distribution, expressed in the developing brain.

The protein resides in the secreted. Functionally, involved in the suppression of bile acid biosynthesis through down-regulation of CYP7A1 expression. This chain is Fibroblast growth factor 15 (Fgf15), found in Mus musculus (Mouse).